A 593-amino-acid chain; its full sequence is Insulin-like growth factor 2 mRNA-binding protein 3-B (593 aa).

2 consecutive RRM domains span residues 2–75 (NKLY…HSVP) and 81–156 (RKLQ…YIPD). The interval 159 to 208 (ATPQSPSQQLQQPQQQHPQGRRGFGQRGPARQGSPGAAARPKPQSEVPLR) is disordered. Residues 161-176 (PQSPSQQLQQPQQQHP) are compositionally biased toward low complexity. 2 consecutive KH domains span residues 204-269 (EVPL…CKII) and 285-352 (EIPL…EEEV). Over residues 390–402 (SGMPPPSAGVSSP) the composition is skewed to low complexity. Residues 390–412 (SGMPPPSAGVSSPTTSASYPPFG) are disordered. KH domains lie at 417–482 (SETV…QGRI) and 499–565 (KLEA…QRKI). The interval 571–593 (QVRRQQQQQQKTAQSGQPQPRRK) is disordered.

Belongs to the RRM IMP/VICKZ family. As to quaternary structure, homodimer and multimer. Associates with microtubules. Interaction with a translocation machinery protein TRAPA of the endoplasmic reticulum. Component of a mRNP complex, at least composed of DAZAP1, IGF2BP3, STAU and VgRBP60. The mRNP complex with DAZAP1, IGF2BP3, STAU and VgRBP60 is only found in the cytoplasm. Interacts with a hnRNP 1 related RNA transport protein VgRBP60 both in the nucleus (in an RNA-independent manner) and the cytoplasm (in an RNA-dependent manner). Found in a B3 activator complex. Expressed in oocytes, kidney and pancreas (at protein level). Expressed in oocytes, kidney and pancreas.

It localises to the nucleus. Its subcellular location is the cytoplasm. The protein resides in the endoplasmic reticulum. In terms of biological role, RNA-binding protein that acts as a regulator of mRNA transport and localization. Binds to the RNA sequence motif 5'-UUCAC-3'. Preferentially binds to N6-methyladenosine (m6A)-containing mRNAs and increases their stability. Mediates the specific association of Vg1 RNA to microtubules. May regulate mRNA translation. Binds specifically to the vegetal localization elements (VLE or VgLE) in the 3'-UTR of Vg1 and VegT mRNAs. Binds to the Vg1 and VegT mRNAs in both the nucleus and the cytoplasm. May regulate mRNA translation. Acts as a transcription regulator. Binds to the 5'-[TA]GGTTACT-3' motif within element 3 of the TFIIIA gene promoter. The chain is Insulin-like growth factor 2 mRNA-binding protein 3-B (igf2bp3-b) from Xenopus laevis (African clawed frog).